The following is a 347-amino-acid chain: S-adenosylmethionine:tRNA ribosyltransferase-isomerase (347 aa).

Belongs to the QueA family. Monomer.

It is found in the cytoplasm. It catalyses the reaction 7-aminomethyl-7-carbaguanosine(34) in tRNA + S-adenosyl-L-methionine = epoxyqueuosine(34) in tRNA + adenine + L-methionine + 2 H(+). It functions in the pathway tRNA modification; tRNA-queuosine biosynthesis. Functionally, transfers and isomerizes the ribose moiety from AdoMet to the 7-aminomethyl group of 7-deazaguanine (preQ1-tRNA) to give epoxyqueuosine (oQ-tRNA). This chain is S-adenosylmethionine:tRNA ribosyltransferase-isomerase, found in Bordetella parapertussis (strain 12822 / ATCC BAA-587 / NCTC 13253).